We begin with the raw amino-acid sequence, 357 residues long: Peptide chain release factor 1 (357 aa).

At Q235 the chain carries N5-methylglutamine. The interval 285–305 (KRHNEASAMRSAQVGSGDRSE) is disordered.

The protein belongs to the prokaryotic/mitochondrial release factor family. In terms of processing, methylated by PrmC. Methylation increases the termination efficiency of RF1.

Its subcellular location is the cytoplasm. Peptide chain release factor 1 directs the termination of translation in response to the peptide chain termination codons UAG and UAA. This chain is Peptide chain release factor 1 (prfA), found in Chlamydia pneumoniae (Chlamydophila pneumoniae).